We begin with the raw amino-acid sequence, 196 residues long: Rho-related protein racA (196 aa).

GTP is bound by residues A13, G15, K16, T17, C18, Y32, T35, G60, K116, D118, and A159. A Mg(2+)-binding site is contributed by T17. 2 consecutive short sequence motifs (switch) follow at residues 26–37 (NAFPNEYIPTVF) and 57–75 (DTAG…YPQT). T35 serves as a coordination point for Mg(2+). The residue at position 193 (C193) is a Cysteine methyl ester. A lipid anchor (S-geranylgeranyl cysteine) is attached at C193. A propeptide spans 194-196 (LLF) (removed in mature form).

This sequence belongs to the small GTPase superfamily. Rho family. In terms of assembly, interacts (GTP-bound form) with PAK2 (via CRIB domain). Requires Mg(2+) as cofactor.

Its subcellular location is the cell membrane. The protein localises to the cytoplasm. It localises to the cytoskeleton. The catalysed reaction is GTP + H2O = GDP + phosphate + H(+). Regulated by guanine nucleotide exchange factors (GEFs) which promote the exchange of bound GDP for free GTP, GTPase activating proteins (GAPs) which increase the GTP hydrolysis activity, and GDP dissociation inhibitors which inhibit the dissociation of the nucleotide from the GTPase. Small GTPase which cycles between active GTP-bound and inactive GDP-bound states. Involved in cytoskeleton remodeling. Plays a role in phagocytosis of bacteria and host erythrocytes. Involved in capping of surface receptors. May be involved in cytokinesis. The chain is Rho-related protein racA from Entamoeba histolytica (strain ATCC 30459 / HM-1:IMSS / ABRM).